The chain runs to 153 residues: UPF0178 protein Sfum_1097 (153 aa).

The protein belongs to the UPF0178 family.

The chain is UPF0178 protein Sfum_1097 from Syntrophobacter fumaroxidans (strain DSM 10017 / MPOB).